A 195-amino-acid polypeptide reads, in one-letter code: N-(5'-phosphoribosyl)anthranilate isomerase (195 aa).

The protein belongs to the TrpF family.

It carries out the reaction N-(5-phospho-beta-D-ribosyl)anthranilate = 1-(2-carboxyphenylamino)-1-deoxy-D-ribulose 5-phosphate. It functions in the pathway amino-acid biosynthesis; L-tryptophan biosynthesis; L-tryptophan from chorismate: step 3/5. This chain is N-(5'-phosphoribosyl)anthranilate isomerase, found in Methanoregula boonei (strain DSM 21154 / JCM 14090 / 6A8).